Reading from the N-terminus, the 426-residue chain is Phosphoribosylamine--glycine ligase (426 aa).

The 208-residue stretch at 113 to 320 (KSLMTEAKIP…LLELLYRAST (208 aa)) folds into the ATP-grasp domain. 139–200 (LESKSIPIVI…EEFMEGQEAS (62 aa)) is an ATP binding site. Mg(2+)-binding residues include E290 and N292.

This sequence belongs to the GARS family. Mg(2+) is required as a cofactor. The cofactor is Mn(2+).

It carries out the reaction 5-phospho-beta-D-ribosylamine + glycine + ATP = N(1)-(5-phospho-beta-D-ribosyl)glycinamide + ADP + phosphate + H(+). The protein operates within purine metabolism; IMP biosynthesis via de novo pathway; N(1)-(5-phospho-D-ribosyl)glycinamide from 5-phospho-alpha-D-ribose 1-diphosphate: step 2/2. The sequence is that of Phosphoribosylamine--glycine ligase from Leptospira interrogans serogroup Icterohaemorrhagiae serovar copenhageni (strain Fiocruz L1-130).